We begin with the raw amino-acid sequence, 701 residues long: MATYKVKVATGTDFFSGTLDSISLTIVGTQGESHKQRLNHFGRDFATGAVDDYTVQCQQDLGELIIIRLHKEPHSFLAKDPWYCNYVQICAPDCRVYHFPAYQWMDGYETLALREATGKITADDTLPILLEHRQEEIRAKKDFYHWRVFVPGLPNYVDIPSYHPPPRRCRNPNRPEWDGYIPGFPILINIKATRFLNSNLRFSFVKTASFFYRLGPMALAFKLRGLVDRKRSWKRLKDIKNIFPATKSVVSEYVAEHWTEDSFFGYQYLNGINPGLIRRCTQIPDKFPVTDEMVAPFLGEGTCLQAELERGNIYLADYRILDGIPTVELNGQQQHHCAPMCLLHFGPDGNMMPIAIQLSQTPGPDCPIFLPNDSEWDWLLAKTWVRYAEFYSHEAVAHLLESHLIGEAFCLALLRNLPMCHPLYKLLIPHTRYNVQINSIGRALLLNKGGLSARAMSLGLEGFAQVMVRGLSELTYKSLCIPNDFVERGVQDLPGYYFRDDSLAVWYAMERYVTEIITYYYPNDAAVEGDPELQCWVQEIFKECLLGRESSGFPTCLRTIPELIEYVTMVMYTCSARHAAVNSGQLEYTSWMPNFPSSMRNPPMQTKGLTTLQTYMDTLPDVKTTCIVLLVLWTLCREPDDRRPLGHFPDIHFVEEGPRRSIEAFRQNLNQISHNIRQRNKCLTLPYYYLDPVLIENSISI.

Residues 2–119 enclose the PLAT domain; that stretch reads ATYKVKVATG…TLALREATGK (118 aa). The 582-residue stretch at 120-701 folds into the Lipoxygenase domain; the sequence is ITADDTLPIL…PVLIENSISI (582 aa). Fe cation-binding residues include His398, His403, His578, Asn582, and Ile701.

The protein belongs to the lipoxygenase family. Fe cation serves as cofactor. In terms of tissue distribution, expressed in skin epidermis and other stratified epithelia including tongue and forestomach. Low levels of expression are found in trachea, brain and lung. Not expressed in intestine, liver, kidney, adipose tissue, muscle or hematopoietic cells.

The protein localises to the cytoplasm. It localises to the perinuclear region. The enzyme catalyses 1-O-methyl-(5Z,8Z,11Z,14Z)-eicosatetraenoate + O2 = 1-O-methyl (5Z,8Z,10E,12R,14Z)-hydroperoxyiecosatetraenoate. It catalyses the reaction 1-O-methyl-(5Z,8Z,11Z,14Z)-eicosatetraenoate + O2 = 1-O-methyl-8-hydroperoxy-(5Z,9E,11Z,14Z)-eicosatetraenoate. It carries out the reaction (5Z,8Z,11Z,14Z)-eicosatetraenoate + O2 = (12R)-hydroperoxy-(5Z,8Z,10E,14Z)-eicosatetraenoate. The catalysed reaction is N-[omega-(9Z,12Z)-octadecadienoyloxy]acyl-beta-D-glucosyl-(1&lt;-&gt;1)-octadecasphing-4E-enine + O2 = N-[omega-(9R)-hydroperoxy-(10E,12Z)-octadecadienoyloxy]acyl-beta-D-glucosyl-(1&lt;-&gt;1)-octadecasphing-4E-enine. The enzyme catalyses a N-[omega-(9Z,12Z)-octadecadienoyloxy]-acylsphin-4E-enine + O2 = a N-[omega-(9R)-hydroperoxy-(10E,12Z)-octadecadienoyloxy]-acylsphin-4E-enine. It catalyses the reaction (6Z,9Z,12Z)-octadecatrienoate + O2 = 10-hydroperoxy-(6Z,8E,12Z)-octadecatrienoate. It carries out the reaction (4Z,7Z,10Z,13Z,16Z,19Z)-docosahexaenoate + O2 = 14-hydroperoxy-(4Z,7Z,10Z,12E,16Z,19Z)-docosahexaenoate. The catalysed reaction is (8Z,11Z,14Z)-eicosatrienoate + O2 = (8Z,10E,14Z)-12-hydroperoxyeicosatrienoate. The enzyme catalyses (5Z,8Z,11Z,14Z,17Z)-eicosapentaenoate + O2 = (5Z,7Z,8Z,10E,14Z,17Z)-12-hydroperoxyeicosapentaenoate. It catalyses the reaction (6Z,9Z,12Z)-octadecatrienoate + O2 = 10R-hydroperoxy-(6Z,8E,12Z)-octadecatrienoate. It carries out the reaction 1-O-methyl-(5Z,8Z,11Z,14Z)-eicosatetraenoate + O2 = 1-O-methyl-(8R)-hydroperoxy-(5Z,9E,11Z,14Z)-eicosatrienoate. The catalysed reaction is 1-O-methyl-(9Z,12Z)-octadecadienoate + O2 = 1-O-methyl-(9R)-hydroperoxy-(10E,12Z)-octadecadienoate. The enzyme catalyses 1-O-methyl-20-hydroxy-(5Z,8Z,11Z,14Z)-eicosatetraenoate + O2 = 1-O-methyl-8-hydroperoxy-20-hydroxy-(5Z,9E,11Z,14Z)-eicosatetraenoate. It catalyses the reaction 1-O-methyl-20-hydroxy-(5Z,8Z,11Z,14Z)-eicosatetraenoate + O2 = 1-O-methyl-12-hydroperoxy-20-hydroxy-(5Z,8Z,10E,14Z)-eicosatetraenoate. It carries out the reaction 1-O-methyl-20-hydroxy-(5Z,8Z,11Z,14Z)-eicosatetraenoate + O2 = 1-O-methyl-9-hydroperoxy-20-hydroxy-(5Z,7E,11Z,14Z)-eicosatetraenoate. The catalysed reaction is 1-O-methyl-(9Z,12Z)-octadecadienoate + O2 = 1-O-methyl-(13S)-hydroperoxy-(9Z,11E)-octadecadienoate. It functions in the pathway lipid metabolism; hydroperoxy eicosatetraenoic acid biosynthesis. It participates in lipid metabolism; sphingolipid metabolism. Increased by calcium. Its function is as follows. Catalyzes the regio and stereo-specific incorporation of a single molecule of dioxygen into free and esterified polyunsaturated fatty acids generating lipid hydroperoxides that can be further reduced to the corresponding hydroxy species. Does not convert arachidonic acid to (12R)-hydroperoxyeicosatetraenoic acid/(12R)-HPETE. In the skin, acts upstream of ALOXE3 on the lineolate moiety of esterified omega-hydroxyacyl-sphingosine (EOS) ceramides to produce an epoxy-ketone derivative, a crucial step in the conjugation of omega-hydroxyceramide to membrane proteins. Therefore plays a crucial role in the synthesis of corneocytes lipid envelope and the establishment of the skin barrier to water loss. May also play a role in the regulation of the expression of airway mucins. This chain is Arachidonate 12-lipoxygenase, 12R-type, found in Mus musculus (Mouse).